We begin with the raw amino-acid sequence, 576 residues long: MDVRFYPAAAGDPASLDFAQCLGYYGYSKFGNNNNYMNMAEANNAFFAASEQTFHTPSLGDEEFEIPPITPPPESDPALGMPDVLLPFQALSDPLPSQGSEFTPQFPPQSLDLPSITISRNLVEQDGVLHSSGLHMDQSHTQVSQYRQDPSLIMRSIVHMTDAARSGVMPPAQLTTINQSQLSAQLGLNLGGASMPHTSPSPPASKSATPSPSSSINEEDADEANRAIGEKRAAPDSGKKPKTPKKKKKKDPNEPQKPVSAYALFFRDTQAAIKGQNPNATFGEVSKIVASMWDSLGEEQKQVYKRKTEAAKKEYLKALAAYRASLVSKAAAESAEAQTIRSVQQTLASTNLTSSLLLNTPLSQHGTVSASPQTLQQSLPRSIAPKPLTMRLPMNQIVTSVTIAANMPSNIGAPLISSMGTTMVGSAPSTQVSPSVQTQQHQMQLQQQQQQQQQQMQQMQQQQLQQHQMHQQIQQQMQQQHFQHHMQQHLQQQQQHLQQQINQQQLQQQLQQRLQLQQLQHMQHQSQPSPRQHSPVASQITSPIPAIGSPQPASQQHQSQIQSQTQTQVLSQVSIF.

Disordered stretches follow at residues Asn189–Pro258, Thr422–Met443, and Leu519–Ser563. Residues Ala204–Ser215 are compositionally biased toward low complexity. Over residues Glu223–Lys239 the composition is skewed to basic and acidic residues. The span at Lys240 to Lys250 shows a compositional bias: basic residues. The HMG box DNA-binding region spans Pro255–Arg323. The segment covering Pro428–Met443 has biased composition (low complexity). Polar residues predominate over residues Pro528–Ser542. Over residues Ser549 to Ser563 the composition is skewed to low complexity.

In terms of assembly, homodimer. Interacts with CREB1; the interaction is not depolarization dependent. Interacts with CREBBP (via C-terminus). Interacts (via HGM box) with CITED1 (via C-terminus); the interaction increases estrogen-response element (ERE)-dependent transcription and protection against cell death. Interacts with CREB1 (phosphorylated form). Expressed mainly in epithelial cells. Expressed in the central nervous system (CNS), in the ileum and within the brain in the frontal and occipital lobe.

It is found in the nucleus. Its function is as follows. Transcriptional coactivator of the p300/CBP-mediated transcription complex. Activates transactivation through cAMP response element (CRE) sites. Protects against cell death by inducing antiapoptotic and repressing pro-apoptotic transcripts. Stimulates transcription from the estrogen-responsive or BCL-2 promoters. Required for depolarization-induced transcription activation of the C-FOS promoter in neurons. Associates with chromatin to the estrogen-responsive C3 promoter region. The polypeptide is TOX high mobility group box family member 3 (TOX3) (Homo sapiens (Human)).